Consider the following 684-residue polypeptide: 1,4-alpha-glucan-branching enzyme (684 aa).

Trp-88 and Lys-123 together coordinate (1,4-alpha-D-glucosyl)n. Residue Asp-340 is the Nucleophile of the active site. Glu-395 serves as the catalytic Proton donor.

The protein belongs to the glycosyl hydrolase 13 family. GlgB subfamily.

Its subcellular location is the cytoplasm. It catalyses the reaction Transfers a segment of a (1-&gt;4)-alpha-D-glucan chain to a primary hydroxy group in a similar glucan chain.. The protein operates within glycan biosynthesis; glycogen biosynthesis. In terms of biological role, glycogen-branching enzyme participates in the glycogen biosynthetic process along with glycogenin and glycogen synthase. Generates alpha-1,6-glucosidic branches from alpha-1,4-linked glucose chains, to increase solubility of the glycogen polymer. The polypeptide is 1,4-alpha-glucan-branching enzyme (be1) (Emericella nidulans (strain FGSC A4 / ATCC 38163 / CBS 112.46 / NRRL 194 / M139) (Aspergillus nidulans)).